The primary structure comprises 397 residues: Lysophospholipid transporter LplT (397 aa).

Topologically, residues 1-17 (MSESVHTNTSLWSKGMK) are periplasmic. A helical membrane pass occupies residues 18 to 38 (AVIVAQFLSAFGDNALLFATL). The Cytoplasmic segment spans residues 39–52 (ALLKAQFYPEWSQP). The helical transmembrane segment at 53-73 (ILQMVFVGAYILFAPFVGQVA) threads the bilayer. Topologically, residues 74–90 (DSFAKGRVMMFANGLKL) are periplasmic. The helical transmembrane segment at 91 to 111 (LGAASICFGINPFLGYTLVGV) threads the bilayer. Over 112–144 (GAAAYSPAKYGILGELTTGSKLVKANGLMEAST) the chain is Cytoplasmic. Residues 145–165 (IAAILLGSVAGGVLADWHVLV) traverse the membrane as a helical segment. Position 166 (Ala-166) is a topological domain, periplasmic. Residues 167–187 (LAACALAYGGAVVANIYIPKL) traverse the membrane as a helical segment. The Cytoplasmic portion of the chain corresponds to 188-226 (AAARPGQSWNLINMTRSFLNACTSLWRNGETRFSLVGTS). The helical transmembrane segment at 227–247 (LFWGAGVTLRFLLVLWVPVAL) threads the bilayer. The Periplasmic segment spans residues 248–256 (GITDNATPT). Residues 257-277 (YLNAMVAIGIVVGAGAAAKLV) form a helical membrane-spanning segment. The Cytoplasmic portion of the chain corresponds to 278 to 280 (TLE). A helical transmembrane segment spans residues 281 to 301 (TVSRCMPAGILIGVVVLIFSL). The Periplasmic segment spans residues 302 to 304 (QHE). A helical membrane pass occupies residues 305 to 325 (LLPAYALLMLIGVMGGFFVVP). The Cytoplasmic portion of the chain corresponds to 326–343 (LNALLQERGKKSVGAGNA). The chain crosses the membrane as a helical span at residues 344 to 364 (IAVQNLGENSAMLLMLGIYSL). Residues 365–366 (AV) are Periplasmic-facing. The helical transmembrane segment at 367–387 (MIGIPVVPIGIGFGALFALAI) threads the bilayer. At 388–397 (TALWIWQRRH) the chain is on the cytoplasmic side.

Belongs to the major facilitator superfamily. LplT (TC 2.A.1.42) family.

Its subcellular location is the cell inner membrane. Its function is as follows. Catalyzes the facilitated diffusion of 2-acyl-glycero-3-phosphoethanolamine (2-acyl-GPE) into the cell. The protein is Lysophospholipid transporter LplT of Escherichia coli O8 (strain IAI1).